The chain runs to 245 residues: Dehydrogenase/reductase SDR family member 6 (245 aa).

NAD(+) is bound by residues 16-18 (QGI), aspartate 37, and aspartate 58. Position 144 (arginine 144) interacts with substrate. The Proton acceptor role is filled by tyrosine 147. NAD(+)-binding positions include lysine 151 and 180 to 184 (VDTPS). Positions 188 and 205 each coordinate substrate.

The protein belongs to the short-chain dehydrogenases/reductases (SDR) family. In terms of assembly, homotetramer.

It is found in the cytoplasm. The catalysed reaction is cis-4-hydroxy-L-proline + NAD(+) = 4-oxo-L-proline + NADH + H(+). It catalyses the reaction (R)-3-hydroxybutanoate + NAD(+) = acetoacetate + NADH + H(+). The protein operates within amino-acid metabolism. It participates in siderophore biosynthesis. Functionally, NAD(H)-dependent dehydrogenase/reductase with a preference for cyclic substrates. Catalyzes stereoselective conversion of 4-oxo-L-proline to cis-4-hydroxy-L-proline, likely a detoxification mechanism for ketoprolines. Mediates the formation of 2,5-dihydroxybenzoate (2,5-DHBA), a siderophore that chelates free cytoplasmic iron and associates with LCN2, thereby regulating iron transport and homeostasis while protecting cells against free radical-induced oxidative stress. The iron-siderophore complex is imported into mitochondria, providing an iron source for mitochondrial metabolic processes in particular heme synthesis. May act as a 3-hydroxybutyrate dehydrogenase. This Bos taurus (Bovine) protein is Dehydrogenase/reductase SDR family member 6 (BDH2).